Here is a 37-residue protein sequence, read N- to C-terminus: Large ribosomal subunit protein bL36c (37 aa).

It belongs to the bacterial ribosomal protein bL36 family.

It is found in the plastid. Its subcellular location is the chloroplast. In Lolium perenne (Perennial ryegrass), this protein is Large ribosomal subunit protein bL36c.